A 375-amino-acid chain; its full sequence is Alcohol dehydrogenase 1 (375 aa).

The residue at position 2 (serine 2) is an N-acetylserine. Zn(2+) is bound by residues cysteine 47, histidine 68, cysteine 98, cysteine 101, cysteine 104, cysteine 112, and cysteine 175. Residues 200-205, aspartate 224, and lysine 229 each bind NAD(+); that span reads GLGGVG. Position 234 is an N6-succinyllysine (lysine 234). Position 293–295 (293–295) interacts with NAD(+); the sequence is VGV. N6-succinyllysine is present on lysine 340. Position 370 (arginine 370) interacts with NAD(+).

It belongs to the zinc-containing alcohol dehydrogenase family. Class-I subfamily. In terms of assembly, dimer of identical or non-identical chains of three types (A, B, C), which are coded by 3 separate genes at different loci. Requires Zn(2+) as cofactor. Expressed at high levels in the liver, small intestine and eye, at moderate levels in kidney, ovary and uterus, and at low levels in the spinal cord, thymus, heart, stomach mucosa, skin and testis.

The protein resides in the cytoplasm. The enzyme catalyses a primary alcohol + NAD(+) = an aldehyde + NADH + H(+). The catalysed reaction is a secondary alcohol + NAD(+) = a ketone + NADH + H(+). In Mus musculus (Mouse), this protein is Alcohol dehydrogenase 1 (Adh1).